The following is a 368-amino-acid chain: Peptide chain release factor 2 (368 aa).

Position 250 is an N5-methylglutamine (glutamine 250).

The protein belongs to the prokaryotic/mitochondrial release factor family. Post-translationally, methylated by PrmC. Methylation increases the termination efficiency of RF2.

The protein localises to the cytoplasm. Functionally, peptide chain release factor 2 directs the termination of translation in response to the peptide chain termination codons UGA and UAA. This chain is Peptide chain release factor 2, found in Chlamydia abortus (strain DSM 27085 / S26/3) (Chlamydophila abortus).